Reading from the N-terminus, the 184-residue chain is Probable chorismate pyruvate-lyase 1 (184 aa).

Arg70, Leu108, and Glu166 together coordinate substrate.

The protein belongs to the UbiC family.

It is found in the cytoplasm. The catalysed reaction is chorismate = 4-hydroxybenzoate + pyruvate. It participates in cofactor biosynthesis; ubiquinone biosynthesis. Removes the pyruvyl group from chorismate, with concomitant aromatization of the ring, to provide 4-hydroxybenzoate (4HB) for the ubiquinone pathway. The sequence is that of Probable chorismate pyruvate-lyase 1 from Burkholderia pseudomallei (strain 1710b).